The primary structure comprises 219 residues: 2-hydroxy-3-keto-5-methylthiopentenyl-1-phosphate phosphatase (219 aa).

The protein belongs to the HAD-like hydrolase superfamily. MtnX family.

The catalysed reaction is 2-hydroxy-5-methylsulfanyl-3-oxopent-1-enyl phosphate + H2O = 1,2-dihydroxy-5-(methylsulfanyl)pent-1-en-3-one + phosphate. Its pathway is amino-acid biosynthesis; L-methionine biosynthesis via salvage pathway; L-methionine from S-methyl-5-thio-alpha-D-ribose 1-phosphate: step 4/6. Functionally, dephosphorylates 2-hydroxy-3-keto-5-methylthiopentenyl-1-phosphate (HK-MTPenyl-1-P) yielding 1,2-dihydroxy-3-keto-5-methylthiopentene (DHK-MTPene). This chain is 2-hydroxy-3-keto-5-methylthiopentenyl-1-phosphate phosphatase, found in Bacillus cereus (strain ZK / E33L).